The sequence spans 787 residues: MQFSYSWLKTQANPDLSADKLEHLLTMAGLEVEEIDTAAPAFSGVVVAEVKSVEKHPDADRLNVTQVDAGTGELVQIVCGAPNVKPGIKVPCSLPVAVLPGNFKIKPTKMRGVPSNGMLCSTNELGLPDDGVDGLHILPEDAPVGTNIREYLDLDDMLFTLKITPNRADCLSVKGIAREVSALTQCAFTPVEIQTAPIGSEKKQAVRIDAPADCGRFISRVIENVNAKAATPDWMKQRLERSGIRSISALVDIGNYVMLEIGQPMHVFDADKLSGSLIVRRAQNGETLACLNEKTVTLADNTLVVADEKGALSLAGLMGGAASAVSDGTQNIVLEAAWFEPEIIVGKSRQYGFGSDSSFRFERGVDYRLQADAIERATELVLQICGGAAGEMVEAQGKLPEAKQVGLRLGRLKTVLGVDIPAEQVETILQHLGLQPEKTAEGFRITAPSFRFDIEIEADLIEEIGRVYGYENIPDDYTSGRLKMSELPETRRPRFAVYNEMAARGYREVISYAFVDEQWELDFAANAAPIRLQNPLAAQYAVMRSTLIGGLVEILQNNLNRKQNRVRVFEIACVFGKGSDGRFVQNERIGGLWYGAAMPEQWGEKTRNADFYDIKADVENLLKNKAVEFVKTGHPALHPGRAANIVSDGKVIGFVGELHPKWLQKYDLPQAPLVFEIDMAAVLECGKTRYRAVSKFQPVRRDLAFVMPEVMNHDDLLLVLKGAANKLVQEISVFDVYRGTGLPEGMKSVAVKVILQDMENTLTDEAVEPLIGKLIGVATEAGARLRS.

Residues A39 to R149 form the tRNA-binding domain. The B5 domain maps to P400–D475. Mg(2+)-binding residues include D453, D459, E462, and E463. The region spanning S694–R786 is the FDX-ACB domain.

It belongs to the phenylalanyl-tRNA synthetase beta subunit family. Type 1 subfamily. Tetramer of two alpha and two beta subunits. Requires Mg(2+) as cofactor.

It localises to the cytoplasm. The enzyme catalyses tRNA(Phe) + L-phenylalanine + ATP = L-phenylalanyl-tRNA(Phe) + AMP + diphosphate + H(+). In Neisseria gonorrhoeae (strain ATCC 700825 / FA 1090), this protein is Phenylalanine--tRNA ligase beta subunit.